The sequence spans 1558 residues: Eukaryotic translation initiation factor 2-alpha kinase 1 (1558 aa).

Residues 429-789 (FFEEKILGCG…AYNLLHESVL (361 aa)) form the Protein kinase domain. Residues 435–443 (LGCGGFGYV) and lysine 458 contribute to the ATP site. Catalysis depends on aspartate 660, which acts as the Proton acceptor. The interval 1014-1033 (GTSTNNNNNNNNNNMGNNNI) is disordered.

The protein belongs to the protein kinase superfamily. Ser/Thr protein kinase family. GCN2 subfamily. Post-translationally, auto-phosphorylated.

It carries out the reaction L-seryl-[protein] + ATP = O-phospho-L-seryl-[protein] + ADP + H(+). It catalyses the reaction L-threonyl-[protein] + ATP = O-phospho-L-threonyl-[protein] + ADP + H(+). In terms of biological role, in blood stage parasites, phosphorylates translation factor eIF2alpha in response to amino acid starvation. During the asexual blood stage, involved in the response to the host hormone melatonin which is used by the parasite to modulate its cell cycle. This Plasmodium falciparum (isolate 3D7) protein is Eukaryotic translation initiation factor 2-alpha kinase 1.